Reading from the N-terminus, the 193-residue chain is ATP-dependent Clp protease proteolytic subunit (193 aa).

The active-site Nucleophile is the Ser98. Residue His123 is part of the active site.

This sequence belongs to the peptidase S14 family. Fourteen ClpP subunits assemble into 2 heptameric rings which stack back to back to give a disk-like structure with a central cavity, resembling the structure of eukaryotic proteasomes.

The protein resides in the cytoplasm. The catalysed reaction is Hydrolysis of proteins to small peptides in the presence of ATP and magnesium. alpha-casein is the usual test substrate. In the absence of ATP, only oligopeptides shorter than five residues are hydrolyzed (such as succinyl-Leu-Tyr-|-NHMec, and Leu-Tyr-Leu-|-Tyr-Trp, in which cleavage of the -Tyr-|-Leu- and -Tyr-|-Trp bonds also occurs).. Functionally, cleaves peptides in various proteins in a process that requires ATP hydrolysis. Has a chymotrypsin-like activity. Plays a major role in the degradation of misfolded proteins. This Mannheimia succiniciproducens (strain KCTC 0769BP / MBEL55E) protein is ATP-dependent Clp protease proteolytic subunit.